Reading from the N-terminus, the 110-residue chain is UPF0145 protein (110 aa).

This sequence belongs to the UPF0145 family.

This chain is UPF0145 protein, found in Listeria ivanovii.